We begin with the raw amino-acid sequence, 61 residues long: DNA-directed RNA polymerase subunit Rpo6 (61 aa).

Belongs to the archaeal Rpo6/eukaryotic RPB6 RNA polymerase subunit family. As to quaternary structure, part of the RNA polymerase complex.

It is found in the cytoplasm. It carries out the reaction RNA(n) + a ribonucleoside 5'-triphosphate = RNA(n+1) + diphosphate. Its function is as follows. DNA-dependent RNA polymerase (RNAP) catalyzes the transcription of DNA into RNA using the four ribonucleoside triphosphates as substrates. In Thermoplasma volcanium (strain ATCC 51530 / DSM 4299 / JCM 9571 / NBRC 15438 / GSS1), this protein is DNA-directed RNA polymerase subunit Rpo6.